The sequence spans 498 residues: Glycerol kinase (498 aa).

Thr12 contacts ADP. Residues Thr12, Thr13, and Ser14 each coordinate ATP. A sn-glycerol 3-phosphate-binding site is contributed by Thr12. ADP is bound at residue Arg16. Positions 82, 83, 134, and 241 each coordinate sn-glycerol 3-phosphate. Positions 82, 83, 134, 241, and 242 each coordinate glycerol. Positions 263 and 310 each coordinate ADP. ATP contacts are provided by Thr263, Gly310, Gln314, and Gly411. Residues Gly411 and Asn415 each coordinate ADP.

The protein belongs to the FGGY kinase family.

It carries out the reaction glycerol + ATP = sn-glycerol 3-phosphate + ADP + H(+). It participates in polyol metabolism; glycerol degradation via glycerol kinase pathway; sn-glycerol 3-phosphate from glycerol: step 1/1. Its activity is regulated as follows. Inhibited by fructose 1,6-bisphosphate (FBP). In terms of biological role, key enzyme in the regulation of glycerol uptake and metabolism. Catalyzes the phosphorylation of glycerol to yield sn-glycerol 3-phosphate. The chain is Glycerol kinase from Janthinobacterium sp. (strain Marseille) (Minibacterium massiliensis).